The chain runs to 377 residues: Chaperone protein DnaJ (377 aa).

Residues 5 to 70 (DFYEVLGVER…SKRAAYDQYG (66 aa)) form the J domain. Residues 136–214 (GTTVTIRVPT…CHGQGRVEEQ (79 aa)) form a CR-type zinc finger. Cys149, Cys152, Cys166, Cys169, Cys188, Cys191, Cys202, and Cys205 together coordinate Zn(2+). CXXCXGXG motif repeat units follow at residues 149-156 (CKTCNGSG), 166-173 (CTTCGGIG), 188-195 (CPRCHGTG), and 202-209 (CGSCHGQG).

It belongs to the DnaJ family. Homodimer. It depends on Zn(2+) as a cofactor.

The protein resides in the cytoplasm. Participates actively in the response to hyperosmotic and heat shock by preventing the aggregation of stress-denatured proteins and by disaggregating proteins, also in an autonomous, DnaK-independent fashion. Unfolded proteins bind initially to DnaJ; upon interaction with the DnaJ-bound protein, DnaK hydrolyzes its bound ATP, resulting in the formation of a stable complex. GrpE releases ADP from DnaK; ATP binding to DnaK triggers the release of the substrate protein, thus completing the reaction cycle. Several rounds of ATP-dependent interactions between DnaJ, DnaK and GrpE are required for fully efficient folding. Also involved, together with DnaK and GrpE, in the DNA replication of plasmids through activation of initiation proteins. This chain is Chaperone protein DnaJ, found in Pseudomonas aeruginosa (strain LESB58).